The sequence spans 505 residues: DNA primase large subunit (505 aa).

An interdomain linker region spans residues 253 to 270 (LSHSYTGQDYSTQKNTGK). The segment at 266 to 503 (KNTGKISLDQ…LEMDLEGLEE (238 aa)) is interacts with PRIM1. [4Fe-4S] cluster is bound by residues Cys287, Cys367, Cys384, and Cys424. An RNA:DNA duplex binding region spans residues 300-442 (HLRHGGRMQY…NVDDCGFSLN (143 aa)). A disordered region spans residues 463–486 (KEISQPETPQHKPSTQKTRDAASA). Residues 467-478 (QPETPQHKPSTQ) are compositionally biased toward polar residues. Position 470 is a phosphothreonine (Thr470).

It belongs to the eukaryotic-type primase large subunit family. As to quaternary structure, heterodimer of a catalytic subunit PRIM1 and a regulatory subunit PRIM2, also known as the DNA primase complex. Interacts via (C-terminus) with PRIM1. Component of the alpha DNA polymerase complex (also known as the alpha DNA polymerase-primase complex) consisting of four subunits: the catalytic subunit POLA1, the regulatory subunit POLA2, and the primase complex subunits PRIM1 and PRIM2 respectively. Within the complex, POLA1 directly interacts with PRIM2. Requires [4Fe-4S] cluster as cofactor.

In terms of biological role, regulatory subunit of the DNA primase complex and component of the DNA polymerase alpha complex (also known as the alpha DNA polymerase-primase complex) which play an essential role in the initiation of DNA synthesis. During the S phase of the cell cycle, the DNA polymerase alpha complex (composed of a catalytic subunit POLA1, an accessory subunit POLA2 and two primase subunits, the catalytic subunit PRIM1 and the regulatory subunit PRIM2) is recruited to DNA at the replicative forks via direct interactions with MCM10 and WDHD1. The primase subunit of the polymerase alpha complex initiates DNA synthesis by oligomerising short RNA primers on both leading and lagging strands. These primers are initially extended by the polymerase alpha catalytic subunit and subsequently transferred to polymerase delta and polymerase epsilon for processive synthesis on the lagging and leading strand, respectively. In the primase complex, both subunits are necessary for the initial di-nucleotide formation, but the extension of the primer depends only on the catalytic subunit. Binds RNA:DNA duplex and coordinates the catalytic activities of PRIM1 and POLA2 during primase-to-polymerase switch. The chain is DNA primase large subunit (Prim2) from Mus musculus (Mouse).